We begin with the raw amino-acid sequence, 1050 residues long: Beta-galactosidase (1050 aa).

Substrate-binding residues include Asn100 and Asp199. Asp199 contributes to the Na(+) binding site. Mg(2+) is bound by residues Glu422, His424, and Glu467. Residues Glu467 and 543–546 contribute to the substrate site; that span reads EYAH. Glu467 acts as the Proton donor in catalysis. Residue Glu543 is the Nucleophile of the active site. Position 603 (Asn603) interacts with Mg(2+). Residues Phe607 and Asn610 each coordinate Na(+). Asn610 and Trp1025 together coordinate substrate.

The protein belongs to the glycosyl hydrolase 2 family. In terms of assembly, homotetramer. Mg(2+) is required as a cofactor. Requires Na(+) as cofactor.

The catalysed reaction is Hydrolysis of terminal non-reducing beta-D-galactose residues in beta-D-galactosides.. In Yersinia pestis bv. Antiqua (strain Angola), this protein is Beta-galactosidase.